Consider the following 202-residue polypeptide: Superoxide dismutase [Mn/Fe] (202 aa).

Positions 26, 80, 163, and 167 each coordinate Fe(3+). Mn(2+) is bound by residues His-26, His-80, Asp-163, and His-167.

Belongs to the iron/manganese superoxide dismutase family. Homodimer. Mn(2+) serves as cofactor. Requires Fe(3+) as cofactor.

It catalyses the reaction 2 superoxide + 2 H(+) = H2O2 + O2. Its function is as follows. Destroys superoxide anion radicals which are normally produced within the cells and which are toxic to biological systems. Catalyzes the dismutation of superoxide anion radicals into O2 and H2O2 by successive reduction and oxidation of the transition metal ion at the active site. This chain is Superoxide dismutase [Mn/Fe] (sodB), found in Methylomonas sp. (strain J).